Consider the following 150-residue polypeptide: Large ribosomal subunit protein bL9 (150 aa).

It belongs to the bacterial ribosomal protein bL9 family.

Functionally, binds to the 23S rRNA. The polypeptide is Large ribosomal subunit protein bL9 (Streptococcus sanguinis (strain SK36)).